A 330-amino-acid polypeptide reads, in one-letter code: Polyprenol dehydrogenase (330 aa).

4 residues coordinate NAD(+): I55, Y208, K212, and T245. Y208 functions as the Proton acceptor in the catalytic mechanism.

Belongs to the short-chain dehydrogenases/reductases (SDR) family. Widely expressed. Highly expressed in the pancreas.

The protein resides in the lipid droplet. The protein localises to the secreted. The enzyme catalyses a di-trans,poly-cis-polyprenol + NAD(+) = a di-trans,poly-cis-polyprenal + NADH + H(+). The catalysed reaction is a di-trans,poly-cis-polyprenol + NADP(+) = a di-trans,poly-cis-polyprenal + NADPH + H(+). It catalyses the reaction a di-trans,poly-cis-dolichol + NADP(+) = a di-trans,poly-cis-dolichal + NADPH + H(+). It carries out the reaction a di-trans,poly-cis-dolichol + NAD(+) = a di-trans,poly-cis-dolichal + NADH + H(+). It participates in protein modification; protein glycosylation. In terms of biological role, oxidoreductase that plays a key role in early steps of protein N-linked glycosylation by mediating two non-consecutive steps in dolichol biosynthesis. Acts both as a NAD(+)-dependent dehydrogenase and as a NADPH-dependent reductase during the conversion of polyprenol into dolichol. First catalyzes the NAD(+)-dependent dehydrogenation of polyprenol into polyprenal; polyprenal is then reduced into dolichal by SRD5A3. It then catalyzes the NADPH-dependent reduction of dolichal into dolichol. May also acts as a positive regulator of starvation-induced autophagy. This is Polyprenol dehydrogenase from Homo sapiens (Human).